The chain runs to 339 residues: MWWLWASLCCLLALGDARSRPSFHPLSDELVNYVNKQNTTWQAGHNFYNVDVSYLKRLCGTFLGGPKPPQRVMFTEDLKLPESFDAREQWPQCPTIKEIRDQGSCGSCWAFGAVEAISDRICIHTNAHVSVEVSAEDLLTCCGIMCGDGCNGGYPAGAWNFWTRKGLVSGGLYDSHVGCRPYSIPPCEHHVNGSRPPCTGEGDTPKCSKICEPGYSPTYKQDKHYGYNSYSVSNSEKDIMAEIYKNGPVEGAFSVYSDFLLYKSGVYQHVTGEMMGGHAIRILGWGVENGTPYWLVANSWNTDWGDNGFFKILRGQDHCGIESEVVAGIPRTDQYWEKI.

An N-terminal signal peptide occupies residues 1-17 (MWWLWASLCCLLALGDA). Positions 18–79 (RSRPSFHPLS…QRVMFTEDLK (62 aa)) are cleaved as a propeptide — activation peptide. Intrachain disulfides connect C93–C122, C105–C150, C141–C207, C142–C146, C179–C211, and C187–C198. C108 is a catalytic residue. N192 is a glycosylation site (N-linked (GlcNAc...) asparagine). Position 220 is an N6-acetyllysine (K220). Active-site residues include H278 and N298. Positions 334-339 (QYWEKI) are excised as a propeptide.

The protein belongs to the peptidase C1 family. In terms of assembly, dimer of a heavy chain and a light chain cross-linked by a disulfide bond. Interacts with SRPX2. Directly interacts with SHKBP1.

Its subcellular location is the lysosome. The protein resides in the melanosome. It is found in the secreted. It localises to the extracellular space. The protein localises to the apical cell membrane. The enzyme catalyses Hydrolysis of proteins with broad specificity for peptide bonds. Preferentially cleaves -Arg-Arg-|-Xaa bonds in small molecule substrates (thus differing from cathepsin L). In addition to being an endopeptidase, shows peptidyl-dipeptidase activity, liberating C-terminal dipeptides.. Its function is as follows. Thiol protease which is believed to participate in intracellular degradation and turnover of proteins. Cleaves matrix extracellular phosphoglycoprotein MEPE. Involved in the solubilization of cross-linked TG/thyroglobulin in the thyroid follicle lumen. Has also been implicated in tumor invasion and metastasis. The protein is Cathepsin B (CTSB) of Macaca fascicularis (Crab-eating macaque).